Here is a 23-residue protein sequence, read N- to C-terminus: 48 kDa cell wall protein (23 aa).

Its subcellular location is the secreted. It localises to the cell wall. The protein is 48 kDa cell wall protein of Nicotiana tabacum (Common tobacco).